Reading from the N-terminus, the 239-residue chain is Protein Thf1 (239 aa).

Positions 183-219 form a coiled coil; the sequence is ERVKKDLELYRSNLDRLKQARAIVEEMVKAARRQQER. A compositionally biased stretch (basic and acidic residues) spans 211 to 221; it reads KAARRQQERRQ. Residues 211-239 form a disordered region; that stretch reads KAARRQQERRQSTASLPETPAADRRESSG.

This sequence belongs to the THF1 family.

Functionally, may be involved in photosynthetic membrane biogenesis. The protein is Protein Thf1 of Synechococcus sp. (strain JA-3-3Ab) (Cyanobacteria bacterium Yellowstone A-Prime).